Consider the following 309-residue polypeptide: Porphobilinogen deaminase (309 aa).

C241 carries the S-(dipyrrolylmethanemethyl)cysteine modification.

Belongs to the HMBS family. In terms of assembly, monomer. Requires dipyrromethane as cofactor.

It carries out the reaction 4 porphobilinogen + H2O = hydroxymethylbilane + 4 NH4(+). It participates in porphyrin-containing compound metabolism; protoporphyrin-IX biosynthesis; coproporphyrinogen-III from 5-aminolevulinate: step 2/4. In terms of biological role, tetrapolymerization of the monopyrrole PBG into the hydroxymethylbilane pre-uroporphyrinogen in several discrete steps. In Geobacillus kaustophilus (strain HTA426), this protein is Porphobilinogen deaminase.